The following is a 216-amino-acid chain: MOB kinase activator 3C (216 aa).

Residues C82, C87, H164, and H169 each contribute to the Zn(2+) site.

It belongs to the MOB1/phocein family.

In terms of biological role, may regulate the activity of kinases. The protein is MOB kinase activator 3C (MOB3C) of Bos taurus (Bovine).